The sequence spans 208 residues: Protein-L-isoaspartate O-methyltransferase (208 aa).

S59 is an active-site residue.

It belongs to the methyltransferase superfamily. L-isoaspartyl/D-aspartyl protein methyltransferase family.

The protein localises to the cytoplasm. It catalyses the reaction [protein]-L-isoaspartate + S-adenosyl-L-methionine = [protein]-L-isoaspartate alpha-methyl ester + S-adenosyl-L-homocysteine. In terms of biological role, catalyzes the methyl esterification of L-isoaspartyl residues in peptides and proteins that result from spontaneous decomposition of normal L-aspartyl and L-asparaginyl residues. It plays a role in the repair and/or degradation of damaged proteins. The chain is Protein-L-isoaspartate O-methyltransferase from Aliivibrio fischeri (strain MJ11) (Vibrio fischeri).